The chain runs to 180 residues: UDP-4-amino-4,6-dideoxy-N-acetyl-beta-L-altrosamine N-acetyltransferase (180 aa).

Positions 13–169 (IDFTNLNDGE…IDVLLYYKDK (157 aa)) constitute an N-acetyltransferase domain.

It carries out the reaction UDP-4-amino-4,6-dideoxy-N-acetyl-beta-L-altrosamine + acetyl-CoA = UDP-2,4-diacetamido-2,4,6-trideoxy-beta-L-altrose + CoA + H(+). Catalyzes the third step in the biosynthesis of pseudaminic acid, a sialic-acid-like sugar that is used to modify flagellin. Mediates N-4 acetylation of UDP-4-amino-4,6-dideoxy-beta-L-AltNAc to form UDP-2,4-diacetamido-2,4,6-trideoxy-beta-L-altropyranose. This is UDP-4-amino-4,6-dideoxy-N-acetyl-beta-L-altrosamine N-acetyltransferase (pseH) from Helicobacter pylori (strain ATCC 700392 / 26695) (Campylobacter pylori).